We begin with the raw amino-acid sequence, 468 residues long: Zinc finger protein mex-5 (468 aa).

A compositionally biased stretch (low complexity) spans 1–19 (MKAASNSVSSAGGSVSPTT). The tract at residues 1–32 (MKAASNSVSSAGGSVSPTTTQPPLPPGQSSHP) is disordered. A Phosphothreonine; by mbk-2 modification is found at T186. The segment covering 243–254 (NHFHEHRGEKFG) has biased composition (basic and acidic residues). The tract at residues 243 to 269 (NHFHEHRGEKFGRRGFPIPETDSQQPP) is disordered. 2 consecutive C3H1-type zinc fingers follow at residues 270–299 (NYKT…HGLK) and 314–344 (KYKT…HPTD). Residues 414-468 (DLQAGGDYNQPESNEDDLPPHLRRNRRENPPMNKRRTSLSTKWTSEENLGLRGHY) are disordered. A compositionally biased stretch (polar residues) spans 451-460 (SLSTKWTSEE). S458 is modified (phosphoserine).

Interacts (when phosphorylated on Thr-186) with plk-1 (via POLO box domain) and plk-2 (via POLO box domain). In terms of processing, phosphorylation on Ser-458 by par-1 promotes localization of the protein to the anterior cytoplasm of the zygote. Phosphorylation by mbk-1 appears to be required for subsequent phosphorylation by plk-1. As to expression, asymmetrically localized to the anterior of the zygote before mitotic division, then differentially distributed to the somatic blastomere precursor cells.

The protein resides in the cytoplasm. Its function is as follows. Functions with mex-6 to affect embryonic viability, establish soma germline asymmetry in embryos and establish plk-1, pie-1, mex-1, and pos-1 asymmetry in embryos. Also affects formation of intestinal cells. Binds to mRNA in vitro, and inhibits pgl-3-mediated P-granule formation, probably by competing with pgl-3 for binding to mRNA. Required for neg-1 expression in anterior blastomeres during embryogenesis. The chain is Zinc finger protein mex-5 from Caenorhabditis elegans.